The sequence spans 942 residues: DDB1- and CUL4-associated factor 5 (942 aa).

WD repeat units lie at residues 51 to 91, 99 to 139, 140 to 180, 185 to 225, 277 to 317, and 331 to 370; these read GHFG…HSRV, EHHS…LDVF, AHED…HGEP, NYPS…SSLL, FNSC…EAGG, and GHRS…GCTG. Disordered stretches follow at residues 449 to 478 and 490 to 509; these read GVSE…ESAD and TTNT…AASR. Polar residues predominate over residues 454–465; it reads SGYTDSESSASL. Thr-500 carries the post-translational modification Phosphothreonine. Residues Ser-531, Ser-533, Ser-626, Ser-628, Ser-645, Ser-648, and Ser-651 each carry the phosphoserine modification. Disordered regions lie at residues 544–655, 676–824, and 889–942; these read TDLF…DIES, NNKD…EERS, and ACET…KLKT. The span at 625 to 641 shows a compositional bias: low complexity; the sequence is LSSSPTSSPERSTSTLE. 2 stretches are compositionally biased toward basic and acidic residues: residues 690–701 and 728–738; these read DEGRAGTSHKDN and CSKDTFKEETP. Positions 760–770 are enriched in polar residues; that stretch reads GTSQDTGNSGS. A Phosphoserine modification is found at Ser-794. Polar residues predominate over residues 801 to 815; the sequence is SGSTLNSGSGNCPRT.

As to quaternary structure, interacts with DDB1, CUL4A or CUL4B. Interacts with L3MBTL3. Interacts with DNMT1. Interacts with E2F1. Interacts with SOX2. In terms of tissue distribution, ubiquitous.

It participates in protein modification; protein ubiquitination. Its function is as follows. Is a substrate receptor for the CUL4-DDB1 E3 ubiquitin-protein ligase complex (CRL4). The complex CRL4-DCAF5 is involved in the ubiquitination of a set of methylated non-histone proteins, including SOX2, DNMT1 and E2F1. In Homo sapiens (Human), this protein is DDB1- and CUL4-associated factor 5 (DCAF5).